A 241-amino-acid chain; its full sequence is Spheroidene monooxygenase (241 aa).

It belongs to the CrtA family. Heme serves as cofactor.

It catalyses the reaction spheroidene + 4 reduced [2Fe-2S]-[ferredoxin] + 2 O2 + 4 H(+) = spheroiden-2-one + 4 oxidized [2Fe-2S]-[ferredoxin] + 3 H2O. The catalysed reaction is spirilloxanthin + 4 reduced [2Fe-2S]-[ferredoxin] + 2 O2 + 4 H(+) = 2-oxospirilloxanthin + 4 oxidized [2Fe-2S]-[ferredoxin] + 3 H2O. It carries out the reaction 2-oxospirilloxanthin + 4 reduced [2Fe-2S]-[ferredoxin] + 2 O2 + 4 H(+) = 2,2'-dioxospirilloxanthin + 4 oxidized [2Fe-2S]-[ferredoxin] + 3 H2O. The enzyme catalyses spheroidene + 2 reduced [2Fe-2S]-[ferredoxin] + O2 + 2 H(+) = 2-hydroxyspheroidene + 2 oxidized [2Fe-2S]-[ferredoxin] + H2O. It catalyses the reaction 2-hydroxyspheroidene + 2 reduced [2Fe-2S]-[ferredoxin] + O2 + 2 H(+) = 2,2-dihydroxyspheroidene + 2 oxidized [2Fe-2S]-[ferredoxin] + H2O. The catalysed reaction is 2,2-dihydroxyspheroidene = spheroiden-2-one + H2O. It carries out the reaction spirilloxanthin + 2 reduced [2Fe-2S]-[ferredoxin] + O2 + 2 H(+) = 2-hydroxyspirilloxanthin + 2 oxidized [2Fe-2S]-[ferredoxin] + H2O. The enzyme catalyses 2-hydroxyspirilloxanthin + 2 reduced [2Fe-2S]-[ferredoxin] + O2 + 2 H(+) = 2,2-dihydroxyspirilloxanthin + 2 oxidized [2Fe-2S]-[ferredoxin] + H2O. It catalyses the reaction 2,2-dihydroxyspirilloxanthin = 2-oxospirilloxanthin + H2O. The catalysed reaction is 2-oxospirilloxanthin + 2 reduced [2Fe-2S]-[ferredoxin] + O2 + 2 H(+) = 2'-hydroxy-2-oxospirilloxanthin + 2 oxidized [2Fe-2S]-[ferredoxin] + H2O. It carries out the reaction 2'-hydroxy-2-oxospirilloxanthin + 2 reduced [2Fe-2S]-[ferredoxin] + O2 + 2 H(+) = 2',2'-dihydroxy-2-oxospirilloxanthin + 2 oxidized [2Fe-2S]-[ferredoxin] + H2O. The enzyme catalyses 2',2'-dihydroxy-2-oxospirilloxanthin = 2,2'-dioxospirilloxanthin + H2O. It participates in carotenoid biosynthesis; spheroidene biosynthesis. Its function is as follows. Involved in the biosynthesis of the carotenoid spheroidene. Catalyzes the introduction of one keto group at the C-2 position of spheroidene. In vitro, can also catalyze the introduction of two keto groups at the C-2 and C-2' positions of spirilloxanthin, but spirilloxanthin biosynthesis pathway is not present in R.capsulatus. This chain is Spheroidene monooxygenase, found in Rhodobacter capsulatus (strain ATCC BAA-309 / NBRC 16581 / SB1003).